A 490-amino-acid polypeptide reads, in one-letter code: Sporulation-specific protein 1 (490 aa).

The region spanning 18 to 272 (YSIQSCIGRG…AYNLLSFEFV (255 aa)) is the Protein kinase domain. ATP-binding positions include 24-32 (IGRGNFGDV) and Lys-47. Asp-141 (proton acceptor) is an active-site residue.

This sequence belongs to the protein kinase superfamily. STE Ser/Thr protein kinase family. STE20 subfamily.

It localises to the nucleus. The protein resides in the cytoplasm. The enzyme catalyses L-seryl-[protein] + ATP = O-phospho-L-seryl-[protein] + ADP + H(+). The catalysed reaction is L-threonyl-[protein] + ATP = O-phospho-L-threonyl-[protein] + ADP + H(+). Serine/threonine protein kinase required for spore wall development. The sequence is that of Sporulation-specific protein 1 (SPS1) from Saccharomyces cerevisiae (strain ATCC 204508 / S288c) (Baker's yeast).